Here is a 218-residue protein sequence, read N- to C-terminus: Putative copper transporter crmD (218 aa).

2 consecutive transmembrane segments (helical) span residues Y37–L57 and M176–V196.

This sequence belongs to the copper transporter (Ctr) (TC 1.A.56) family. SLC31A subfamily.

Its subcellular location is the membrane. It catalyses the reaction Cu(2+)(in) = Cu(2+)(out). Putative copper transporter; part of the crm gene cluster that mediates the biosynthesis of a yet unidentified copper-responsive metabolite. Probably involved in the transport of copper, even if it does not act as a major copper transporter. In contrast to crmA, is not involved in the biosynthesis of fumivalines or fumicicolins. The chain is Putative copper transporter crmD from Aspergillus fumigatus (strain ATCC MYA-4609 / CBS 101355 / FGSC A1100 / Af293) (Neosartorya fumigata).